The chain runs to 608 residues: Glutamine--fructose-6-phosphate aminotransferase [isomerizing] (608 aa).

Cys2 functions as the Nucleophile; for GATase activity in the catalytic mechanism. Residues 2–217 (CGIVGIVGTQ…DGDCAIVTRD (216 aa)) enclose the Glutamine amidotransferase type-2 domain. 2 consecutive SIS domains span residues 281–422 (ADKA…ARGT) and 456–598 (LSRD…VDQP). The active-site For Fru-6P isomerization activity is the Lys603.

As to quaternary structure, homodimer.

It localises to the cytoplasm. It catalyses the reaction D-fructose 6-phosphate + L-glutamine = D-glucosamine 6-phosphate + L-glutamate. Functionally, catalyzes the first step in hexosamine metabolism, converting fructose-6P into glucosamine-6P using glutamine as a nitrogen source. The chain is Glutamine--fructose-6-phosphate aminotransferase [isomerizing] from Agrobacterium fabrum (strain C58 / ATCC 33970) (Agrobacterium tumefaciens (strain C58)).